The chain runs to 198 residues: Peroxiredoxin-2 (198 aa).

A2 is modified (N-acetylalanine). Residues 6–164 enclose the Thioredoxin domain; sequence ARIGKPAPDF…ALRLVQAFQY (159 aa). C51 acts as the Cysteine sulfenic acid (-SOH) intermediate in catalysis. The residue at position 112 (S112) is a Phosphoserine. Phosphothreonine is present on T182. K196 is modified (N6-acetyllysine).

This sequence belongs to the peroxiredoxin family. AhpC/Prx1 subfamily. In terms of assembly, homodimer; disulfide-linked, upon oxidation. 5 homodimers assemble to form a ring-like decamer. Interacts with TIPIN. In terms of processing, the enzyme can be inactivated by further oxidation of the cysteine sulfenic acid (C(P)-SOH) to sulphinic acid (C(P)-SO2H) instead of its condensation to a disulfide bond. It can be reactivated by forming a transient disulfide bond with sulfiredoxin SRXN1, which reduces the cysteine sulfinic acid in an ATP- and Mg-dependent manner. Acetylation increases resistance to transition to high molecular-mass complexes. Deacetylated by HDAC6 which decreases reducing activity.

It is found in the cytoplasm. The catalysed reaction is a hydroperoxide + [thioredoxin]-dithiol = an alcohol + [thioredoxin]-disulfide + H2O. Thiol-specific peroxidase that catalyzes the reduction of hydrogen peroxide and organic hydroperoxides to water and alcohols, respectively. Plays a role in cell protection against oxidative stress by detoxifying peroxides and as sensor of hydrogen peroxide-mediated signaling events. Might participate in the signaling cascades of growth factors and tumor necrosis factor-alpha by regulating the intracellular concentrations of H(2)O(2). The polypeptide is Peroxiredoxin-2 (PRDX2) (Macaca fascicularis (Crab-eating macaque)).